The sequence spans 938 residues: Protein translocase subunit SecA (938 aa).

ATP-binding positions include Q90, 108-112, and D504; that span reads GEGKT.

This sequence belongs to the SecA family. Monomer and homodimer. Part of the essential Sec protein translocation apparatus which comprises SecA, SecYEG and auxiliary proteins SecDF. Other proteins may also be involved.

It is found in the cell inner membrane. The protein localises to the cellular thylakoid membrane. The protein resides in the cytoplasm. The enzyme catalyses ATP + H2O + cellular proteinSide 1 = ADP + phosphate + cellular proteinSide 2.. Functionally, part of the Sec protein translocase complex. Interacts with the SecYEG preprotein conducting channel. Has a central role in coupling the hydrolysis of ATP to the transfer of proteins into and across the cell membrane, serving as an ATP-driven molecular motor driving the stepwise translocation of polypeptide chains across the membrane. Its function is as follows. Probably participates in protein translocation into and across both the cytoplasmic and thylakoid membranes in cyanobacterial cells. The sequence is that of Protein translocase subunit SecA from Picosynechococcus sp. (strain ATCC 27264 / PCC 7002 / PR-6) (Agmenellum quadruplicatum).